Reading from the N-terminus, the 1075-residue chain is Paired amphipathic helix protein pst2 (1075 aa).

PAH domains lie at 28-102, 138-208, and 243-319; these read SPNG…LPSS, LPCT…LPSS, and RPDN…TSLS. Residues S641 and S643 each carry the phosphoserine modification. The tract at residues 647 to 700 is disordered; sequence LTEFVKQPKINGQRESRSAAAARKKEESGNKSQSNSQNSLSDESGNVTPVSKKQ. Residues 658–675 show a composition bias toward basic and acidic residues; that stretch reads GQRESRSAAAARKKEESG. Residues 676-691 are compositionally biased toward low complexity; sequence NKSQSNSQNSLSDESG.

As to quaternary structure, heterotetramer of alp13, clr6, prw1 and pst2.

Its subcellular location is the nucleus. Has a role in chromatin assembly and chromosome segregation. Involved in the deacetylation of histones. The protein is Paired amphipathic helix protein pst2 (pst2) of Schizosaccharomyces pombe (strain 972 / ATCC 24843) (Fission yeast).